The following is a 59-amino-acid chain: uncharacterized protein (59 aa).

It is found in the mitochondrion. This is an uncharacterized protein from Ascobolus immersus.